The primary structure comprises 235 residues: Large ribosomal subunit protein uL1 (235 aa).

It belongs to the universal ribosomal protein uL1 family. As to quaternary structure, part of the 50S ribosomal subunit.

In terms of biological role, binds directly to 23S rRNA. The L1 stalk is quite mobile in the ribosome, and is involved in E site tRNA release. Functionally, protein L1 is also a translational repressor protein, it controls the translation of the L11 operon by binding to its mRNA. This is Large ribosomal subunit protein uL1 from Prochlorococcus marinus (strain MIT 9312).